Here is an 85-residue protein sequence, read N- to C-terminus: Beta-insect depressant toxin Lqh-dprIT3b (85 aa).

An N-terminal signal peptide occupies residues methionine 1–alanine 21. Residues aspartate 22 to glycine 82 form the LCN-type CS-alpha/beta domain. 4 cysteine pairs are disulfide-bonded: cysteine 31–cysteine 81, cysteine 35–cysteine 56, cysteine 42–cysteine 63, and cysteine 46–cysteine 65. Glycine 82 bears the Glycine amide mark.

It belongs to the long (4 C-C) scorpion toxin superfamily. Sodium channel inhibitor family. Beta subfamily. As to expression, expressed by the venom gland.

It is found in the secreted. In terms of biological role, depressant insect beta-toxins cause a transient contraction paralysis followed by a slow flaccid paralysis. They bind voltage-independently at site-4 of sodium channels (Nav) and block action potentials, primarily by depolarizing the axonal membrane and suppressing the sodium current. This depressant toxin is active only on insects. It is found in a relatively small amount in the venom, and its activity on insects is 10-fold higher compared to other known depressant toxins. In Leiurus hebraeus (Hebrew deathstalker scorpion), this protein is Beta-insect depressant toxin Lqh-dprIT3b.